The sequence spans 117 residues: Large ribosomal subunit protein uL18 (117 aa).

It belongs to the universal ribosomal protein uL18 family. In terms of assembly, part of the 50S ribosomal subunit; part of the 5S rRNA/L5/L18/L25 subcomplex. Contacts the 5S and 23S rRNAs.

Its function is as follows. This is one of the proteins that bind and probably mediate the attachment of the 5S RNA into the large ribosomal subunit, where it forms part of the central protuberance. This chain is Large ribosomal subunit protein uL18, found in Vibrio campbellii (strain ATCC BAA-1116).